Consider the following 151-residue polypeptide: Deoxyuridine 5'-triphosphate nucleotidohydrolase (151 aa).

Residues 70 to 72 (RSG), Asn-83, 87 to 89 (LID), and Lys-97 contribute to the substrate site.

The protein belongs to the dUTPase family. Mg(2+) serves as cofactor.

The catalysed reaction is dUTP + H2O = dUMP + diphosphate + H(+). The protein operates within pyrimidine metabolism; dUMP biosynthesis; dUMP from dCTP (dUTP route): step 2/2. Its function is as follows. This enzyme is involved in nucleotide metabolism: it produces dUMP, the immediate precursor of thymidine nucleotides and it decreases the intracellular concentration of dUTP so that uracil cannot be incorporated into DNA. The polypeptide is Deoxyuridine 5'-triphosphate nucleotidohydrolase (Idiomarina loihiensis (strain ATCC BAA-735 / DSM 15497 / L2-TR)).